The following is a 2200-amino-acid chain: Non-reducing polyketide synthase tpeB (2200 aa).

A Starter acyltransferase (SAT) domain is found at 16-255 (FFGDQTVDTL…MDLPLGTPAH (240 aa)). The Ketosynthase family 3 (KS3) domain occupies 382–815 (SNMIAIVGQS…GGNNCVLLEE (434 aa)). Residues cysteine 554, histidine 690, and histidine 729 each act as for beta-ketoacyl synthase activity in the active site. In terms of domain architecture, Malonyl-CoA:ACP transacylase (MAT) spans 914–1202 (VFAFTGQGSQ…VLNSFIKATL (289 aa)). Residues 1296–1621 (TASLQRVREE…TKRILTTILG (326 aa)) are product template (PT) domain. The tract at residues 1300 to 1433 (QRVREERIQG…CKIRFESKAD (134 aa)) is N-terminal hotdog fold. The region spanning 1300 to 1617 (QRVREERIQG…FQRLTKRILT (318 aa)) is the PKS/mFAS DH domain. Residue histidine 1332 is the Proton acceptor; for dehydratase activity of the active site. Residues 1462–1617 (NGHKLPKPVV…FQRLTKRILT (156 aa)) form a C-terminal hotdog fold region. Aspartate 1522 serves as the catalytic Proton donor; for dehydratase activity. Residues 1625–1652 (DHHNSNEVRNGNATTTHTNPPAHATTQS) form a disordered region. A compositionally biased stretch (low complexity) spans 1636-1650 (NATTTHTNPPAHATT). Carrier domains are found at residues 1671–1748 (TVGE…AELP) and 1791–1865 (ANYA…GPNT). O-(pantetheine 4'-phosphoryl)serine occurs at positions 1708 and 1825. Residues 1931–2173 (MFFLPDGTGY…TVPCDHLSIM (243 aa)) are thioesterase (TE) domain.

The cofactor is pantetheine 4'-phosphate.

The protein operates within secondary metabolite biosynthesis. Functionally, non-reducing polyketide synthase; part of the gene cluster that mediates the biosynthesis of polyesters containing 2,4-dihydroxy-6-(2-hydroxypropyl)benzoate and 3-hydroxybutyrate moieties, such as talapolyester G, 15G256beta and 15G256beta-2; as well as to oxidized derivatives such as 15G256alpha. The biosynthesis of the polyesters probably starts with the formation of the diketide 3-hydroxybutyryl-S-ACP catalyzed by the partially reducing polyketide synthase tpeA. The acceptance of 3-hydroxybutyryl by the non-reducing polyketide synthase tpeB would initiate further elongation and cyclization, catalyzed by KS and PT, respectively, to form 2,4-dihydroxy-6-(2-hydroxyn-propyl)benzoyl-S-ACP intermediate. The TE domain could catalyze lactonization at this step to yield 6-hydroxymellein as a derailment product. The polyesterification process maybe occurs when additional molecules of 3-hydroxybutyryl are transferred to tpeB. Following the first esterification step, an intramolecular cyclization catalyzed by the TE domain of tpeB would give talarodioxadione 1, whereas the ethyl esterification of talapolyester G perhaps happens spontaneously. Further oxidation by the cytochrome P450 monooxygenase tpeC then leads to the formation of oxidized derivatives. In Talaromyces stipitatus (strain ATCC 10500 / CBS 375.48 / QM 6759 / NRRL 1006) (Penicillium stipitatum), this protein is Non-reducing polyketide synthase tpeB.